A 273-amino-acid chain; its full sequence is Large ribosomal subunit protein uL2 (273 aa).

A disordered region spans residues 222-273; that stretch reads GMAMNPVDHPHGGGEGRNKGIQPVSPWGTPAKGYRTRSNKRTDKYIVRRRNK. Residues 229 to 239 show a composition bias toward basic and acidic residues; that stretch reads DHPHGGGEGRN.

Belongs to the universal ribosomal protein uL2 family. In terms of assembly, part of the 50S ribosomal subunit. Forms a bridge to the 30S subunit in the 70S ribosome.

One of the primary rRNA binding proteins. Required for association of the 30S and 50S subunits to form the 70S ribosome, for tRNA binding and peptide bond formation. It has been suggested to have peptidyltransferase activity; this is somewhat controversial. Makes several contacts with the 16S rRNA in the 70S ribosome. This is Large ribosomal subunit protein uL2 from Tolumonas auensis (strain DSM 9187 / NBRC 110442 / TA 4).